Here is a 970-residue protein sequence, read N- to C-terminus: Anaphase-promoting complex subunit 3 (970 aa).

4 TPR repeats span residues 35-68 (EDNL…TMIK), 74-107 (ALSN…NNNN), 142-175 (NNNS…NSIS), and 185-218 (GSVY…YPFL). The tract at residues 106-149 (NNNNNNNNNNNNNNNNNNNNNNNKDKCNNSNKNNDSNNNSNSNN) is disordered. Positions 274–300 (KVNNNNNNNNNNNNNINNNNSSNKNNE) are disordered. TPR repeat units lie at residues 319 to 353 (IKPN…TPIN) and 361 to 394 (TNQQ…TPQT). Disordered regions lie at residues 358–379 (IQQT…PSQQ), 414–525 (PIPM…TTTT), and 556–582 (SSLS…HNKS). Positions 359–379 (QQTNQQQQQQQQQQPQQPSQQ) are enriched in low complexity. Residues 424-443 (SKGSQHPPSSNSQTPYTPST) are compositionally biased toward polar residues. The segment covering 446–460 (VHHHQKQQPHQHKKS) has biased composition (basic residues). Residues 500–525 (TSSTSKQQQQQQQTKQQTTTTTTTTT) are compositionally biased toward low complexity. TPR repeat units lie at residues 546-580 (TEEF…HHHN), 636-671 (LELF…QYRT), 672-705 (GWVL…EPYR), 740-773 (PYSW…DPDM), 775-807 (YAYT…DPRH), 808-841 (YNAF…NESS), 843-876 (VLCC…QPKN), 878-910 (FAKF…EPKE), and 911-944 (TPIY…DPKN). Over residues 570–580 (YQQHHHLHHHN) the composition is skewed to basic residues.

This sequence belongs to the APC3/CDC27 family. As to quaternary structure, the APC/C is composed of at least 13 subunits that stay tightly associated throughout the cell cycle: anapc1, anapc2, anapc3, anapc4, anapc5, anapc6, anapc7, anapc8, anapc10, anapc11, cdc20, cdc26 and cdh1.

The protein resides in the nucleus. It functions in the pathway protein modification; protein ubiquitination. Component of the anaphase promoting complex/cyclosome (APC/C), a cell cycle-regulated E3 ubiquitin-protein ligase complex that controls progression through mitosis and the G1 phase of the cell cycle. This chain is Anaphase-promoting complex subunit 3 (anapc3), found in Dictyostelium discoideum (Social amoeba).